The primary structure comprises 124 residues: Translation initiation factor 5A (124 aa).

A disordered region spans residues 27–53 (TSYSTSKPGKHGSAKARVEGTGVFDGQ). Hypusine is present on lysine 36.

The protein belongs to the eIF-5A family.

It localises to the cytoplasm. In terms of biological role, functions by promoting the formation of the first peptide bond. The polypeptide is Translation initiation factor 5A (Natronomonas pharaonis (strain ATCC 35678 / DSM 2160 / CIP 103997 / JCM 8858 / NBRC 14720 / NCIMB 2260 / Gabara) (Halobacterium pharaonis)).